The sequence spans 608 residues: Nuclear protein localization protein 4 homolog (608 aa).

Residue Ala-2 is modified to N-acetylalanine. At Lys-179 the chain carries N6-acetyllysine. Positions 226 to 363 (IMFENHTVAD…MCRLSPDGHF (138 aa)) constitute an MPN domain. Residues 580–608 (TAAMWACQHCTFMNQPGTGHCEMCSLPRT) form a RanBP2-type zinc finger.

The protein belongs to the NPL4 family. In terms of assembly, heterodimer with UFD1. The heterodimer binds ubiquitinated proteins. The heterodimer binds to VCP and inhibits Golgi membrane fusion. Interacts with ZFAND2B; probably through VCP. As to expression, expressed at highest levels in brain, heart, skeletal muscle, kidney and fetal liver.

The protein localises to the cytoplasm. Its subcellular location is the cytosol. The protein resides in the endoplasmic reticulum. It localises to the nucleus. The protein operates within protein degradation; proteasomal ubiquitin-dependent pathway. Its function is as follows. The ternary complex containing UFD1, VCP and NPLOC4 binds ubiquitinated proteins and is necessary for the export of misfolded proteins from the ER to the cytoplasm, where they are degraded by the proteasome. The NPLOC4-UFD1-VCP complex regulates spindle disassembly at the end of mitosis and is necessary for the formation of a closed nuclear envelope. Acts as a negative regulator of type I interferon production via the complex formed with VCP and UFD1, which binds to RIGI and recruits RNF125 to promote ubiquitination and degradation of RIGI. This Homo sapiens (Human) protein is Nuclear protein localization protein 4 homolog (NPLOC4).